Consider the following 278-residue polypeptide: Digeranylgeranylglyceryl phosphate synthase (278 aa).

Helical transmembrane passes span 12 to 32 (LKNC…ASYF), 34 to 54 (LATV…CGFG), 91 to 111 (LLVF…LMAV), 129 to 149 (IIGN…GGIA), 153 to 173 (IDVT…REII), 204 to 224 (FLLV…FFGI), 225 to 245 (YYML…YNLV), and 257 to 277 (SRNI…GSLF).

This sequence belongs to the UbiA prenyltransferase family. DGGGP synthase subfamily. Mg(2+) is required as a cofactor.

The protein localises to the cell membrane. The catalysed reaction is sn-3-O-(geranylgeranyl)glycerol 1-phosphate + (2E,6E,10E)-geranylgeranyl diphosphate = 2,3-bis-O-(geranylgeranyl)-sn-glycerol 1-phosphate + diphosphate. The protein operates within membrane lipid metabolism; glycerophospholipid metabolism. Prenyltransferase that catalyzes the transfer of the geranylgeranyl moiety of geranylgeranyl diphosphate (GGPP) to the C2 hydroxyl of (S)-3-O-geranylgeranylglyceryl phosphate (GGGP). This reaction is the second ether-bond-formation step in the biosynthesis of archaeal membrane lipids. This chain is Digeranylgeranylglyceryl phosphate synthase, found in Methanococcus maripaludis (strain C7 / ATCC BAA-1331).